Here is a 113-residue protein sequence, read N- to C-terminus: uncharacterized protein (113 aa).

This is an uncharacterized protein from Saccharomyces cerevisiae (strain ATCC 204508 / S288c) (Baker's yeast).